The sequence spans 200 residues: Transcription elongation factor A protein-like 3 (200 aa).

Over residues 1–19 (MEEVRGENEGKLEKEGKPE) the composition is skewed to basic and acidic residues. Residues 1-200 (MEEVRGENEG…QRGLHDIPYL (200 aa)) form a disordered region. Positions 20-34 (DEVEPEDEEKSDEDE) are enriched in acidic residues. The residue at position 30 (serine 30) is a Phosphoserine. Basic and acidic residues-rich tracts occupy residues 47–85 (GKPE…KPDS), 94–106 (RAAE…DYVP), and 114–153 (DRGT…EELR).

The protein belongs to the TFS-II family. TFA subfamily.

Its subcellular location is the nucleus. Functionally, may be involved in transcriptional regulation. In Mus musculus (Mouse), this protein is Transcription elongation factor A protein-like 3 (Tceal3).